The sequence spans 312 residues: MDKEWLEVCIYTSSEALEAISGILYNTGVKGVSIEDPKDIEFKRKHPGDWDYFDETLLKVKDTAIVKGYYKEDDKFNEYLDYIKKSVSNLDQFGIDKGEGLVEVHKVNEEDWENNWKKYYKPTKVSNKIVIKPIWENYDKKQEEIIVELDPGMAFGTGTHETTRMCINALEKYIKEDRTVFDIGCGSGILSIAAAKLGAKHVIGVDLDPVAVKSSKENIKYNNLDNIEILEGNLMEVVEGRANIVVANIIADVIIFLTEGVKAFIEKGGYFIASGIINSRKEDVIKKLEETGFIIEEVREEGEWACIVSKIN.

Residues T163, G184, D206, and N248 each contribute to the S-adenosyl-L-methionine site.

This sequence belongs to the methyltransferase superfamily. PrmA family.

The protein localises to the cytoplasm. It carries out the reaction L-lysyl-[protein] + 3 S-adenosyl-L-methionine = N(6),N(6),N(6)-trimethyl-L-lysyl-[protein] + 3 S-adenosyl-L-homocysteine + 3 H(+). Its function is as follows. Methylates ribosomal protein L11. The polypeptide is Ribosomal protein L11 methyltransferase (Clostridium botulinum (strain Hall / ATCC 3502 / NCTC 13319 / Type A)).